A 386-amino-acid polypeptide reads, in one-letter code: Alanine racemase (386 aa).

Residue lysine 38 is the Proton acceptor; specific for D-alanine of the active site. The residue at position 38 (lysine 38) is an N6-(pyridoxal phosphate)lysine. Arginine 136 lines the substrate pocket. The active-site Proton acceptor; specific for L-alanine is the tyrosine 267. Methionine 315 contributes to the substrate binding site.

The protein belongs to the alanine racemase family. Pyridoxal 5'-phosphate is required as a cofactor.

The enzyme catalyses L-alanine = D-alanine. The protein operates within amino-acid biosynthesis; D-alanine biosynthesis; D-alanine from L-alanine: step 1/1. Catalyzes the interconversion of L-alanine and D-alanine. May also act on other amino acids. This Clostridium perfringens (strain SM101 / Type A) protein is Alanine racemase (alr).